We begin with the raw amino-acid sequence, 1040 residues long: Probable starch synthase 4, chloroplastic/amyloplastic (1040 aa).

The transit peptide at 1–42 (MTTKLSSFCFLTHGLAGISCEREHGSSRRFFYLPSRRLVSTS) directs the protein to the chloroplast. Positions 43 to 142 (CKMRQQRGFD…KSKTAKKKGE (100 aa)) are disordered. 2 stretches are compositionally biased toward basic and acidic residues: residues 52 to 61 (DSSKRQEVKK) and 112 to 124 (NHADENLEKKDDI). The stretch at 187-466 (ELMTMIRSAE…EESKKKSRDE (280 aa)) forms a coiled coil. 3 residues coordinate ADP: lysine 556, glycine 559, and aspartate 562. (1,4-alpha-D-glucosyl)n contacts are provided by tryptophan 679 and glutamine 680. Residues arginine 849, lysine 854, lysine 906, aspartate 908, tyrosine 916, leucine 933, and threonine 934 each coordinate ADP.

Belongs to the glycosyltransferase 1 family. Bacterial/plant glycogen synthase subfamily. As to quaternary structure, interacts with PTST2. Interacts with PII1; the interaction is essential for the initiation of starch granules biosynthesis in leaf chloroplasts. Expressed in leaves and flowers.

The protein resides in the plastid. It is found in the chloroplast. Its subcellular location is the amyloplast. It localises to the chloroplast stroma. It catalyses the reaction [(1-&gt;4)-alpha-D-glucosyl](n) + ADP-alpha-D-glucose = [(1-&gt;4)-alpha-D-glucosyl](n+1) + ADP + H(+). It functions in the pathway glycan biosynthesis; starch biosynthesis. Probably involved in the priming of starch granule formation. May play a regulatory role in the control of starch accumulation in plastids. Is necessary and sufficient to establish the correct number of starch granules observed in chloroplasts. The sequence is that of Probable starch synthase 4, chloroplastic/amyloplastic from Arabidopsis thaliana (Mouse-ear cress).